Reading from the N-terminus, the 364-residue chain is Nucleoporin SEH1 (364 aa).

WD repeat units lie at residues Asp-10–Cys-49, Thr-55–Lys-96, Asp-111–Gln-152, Ser-160–Ala-210, Thr-217–Ala-258, and Ser-276–Cys-315.

This sequence belongs to the WD repeat SEC13 family. Component of the Nup107-160 subcomplex of the nuclear pore complex (NPC). The Nup107-160 subcomplex includes NUP160, NUP133, NUP107, NUP98, NUP85, NUP43, NUP37, SEH1 and SEC13. Component of the GATOR2 subcomplex, composed of MIOS, SEC13, SEH1L, WDR24 and WDR59. The GATOR2 complex interacts with CASTOR1 and CASTOR2; the interaction is negatively regulated by arginine. The GATOR2 complex interacts with SESN1, SESN2 and SESN3; the interaction is negatively regulated by amino acids.

The protein localises to the chromosome. The protein resides in the centromere. It is found in the kinetochore. It localises to the nucleus. Its subcellular location is the nuclear pore complex. The protein localises to the lysosome membrane. The GATOR2 complex is negatively regulated by the upstream amino acid sensors CASTOR1 and SESN2, which sequester the GATOR2 complex in absence of amino acids. In the presence of abundant amino acids, GATOR2 is released from CASTOR1 and SESN2 and activated. In terms of biological role, component of the Nup107-160 subcomplex of the nuclear pore complex (NPC). The Nup107-160 subcomplex is required for the assembly of a functional NPC. The Nup107-160 subcomplex is also required for normal kinetochore microtubule attachment, mitotic progression and chromosome segregation. This subunit plays a role in recruitment of the Nup107-160 subcomplex to the kinetochore. Functionally, as a component of the GATOR2 complex, functions as an activator of the amino acid-sensing branch of the mTORC1 signaling pathway. The GATOR2 complex indirectly activates mTORC1 through the inhibition of the GATOR1 subcomplex. GATOR2 probably acts as an E3 ubiquitin-protein ligase toward GATOR1. In the presence of abundant amino acids, the GATOR2 complex mediates ubiquitination of the NPRL2 core component of the GATOR1 complex, leading to GATOR1 inactivation. In the absence of amino acids, GATOR2 is inhibited, activating the GATOR1 complex. The protein is Nucleoporin SEH1 (seh1l) of Danio rerio (Zebrafish).